Consider the following 260-residue polypeptide: Thiazole synthase (260 aa).

Catalysis depends on lysine 96, which acts as the Schiff-base intermediate with DXP. Residues glycine 157, 184–185, and 206–207 each bind 1-deoxy-D-xylulose 5-phosphate; these read AG and NT.

This sequence belongs to the ThiG family. In terms of assembly, homotetramer. Forms heterodimers with either ThiH or ThiS.

The protein resides in the cytoplasm. It carries out the reaction [ThiS sulfur-carrier protein]-C-terminal-Gly-aminoethanethioate + 2-iminoacetate + 1-deoxy-D-xylulose 5-phosphate = [ThiS sulfur-carrier protein]-C-terminal Gly-Gly + 2-[(2R,5Z)-2-carboxy-4-methylthiazol-5(2H)-ylidene]ethyl phosphate + 2 H2O + H(+). It functions in the pathway cofactor biosynthesis; thiamine diphosphate biosynthesis. Functionally, catalyzes the rearrangement of 1-deoxy-D-xylulose 5-phosphate (DXP) to produce the thiazole phosphate moiety of thiamine. Sulfur is provided by the thiocarboxylate moiety of the carrier protein ThiS. In vitro, sulfur can be provided by H(2)S. This is Thiazole synthase from Nitrobacter hamburgensis (strain DSM 10229 / NCIMB 13809 / X14).